A 593-amino-acid polypeptide reads, in one-letter code: Trehalose synthase/amylase TreS (593 aa).

Asp90 contacts substrate. Ca(2+) is bound at residue Asn132. Substrate is bound by residues His133 and Gln198. Asp200 contacts Ca(2+). Arg228 is a substrate binding site. Asp230 (nucleophile) is an active-site residue. 3 residues coordinate Ca(2+): Tyr234, Leu235, and Glu237. The Proton donor role is filled by Glu272. Substrate-binding residues include His341 and Asp342.

The protein belongs to the glycosyl hydrolase 13 family. TreS subfamily. In terms of assembly, homohexamer.

It catalyses the reaction D-maltose = alpha,alpha-trehalose. The catalysed reaction is Endohydrolysis of (1-&gt;4)-alpha-D-glucosidic linkages in polysaccharides containing three or more (1-&gt;4)-alpha-linked D-glucose units.. Its pathway is glycan biosynthesis; glycogen biosynthesis. The amylase activity is stimulated by addition of Ca(2+), but this cation and other divalent cations inhibit the trehalose synthase activity. In addition, trehalose synthase activity, but not amylase activity, is strongly inhibited, and in a competitive manner, by validoxylamine. On the other hand, amylase, but not trehalose synthase activity, is inhibited by the known transition-state amylase inhibitor, acarbose, suggesting the possibility of two different active sites. Other metal ions such as Mg(2+), Mn(2+), and Co(2+) are also somewhat effective in the stimulation of amylase activity, but Hg(2+), Cu(2+), Ni(2+) and Zn(2+) are inhibitory. Functionally, catalyzes the reversible interconversion of maltose and trehalose by transglucosylation. Maltose is the preferred substrate. To a lesser extent, also displays amylase activity, catalyzing the endohydrolysis of (1-&gt;4)-alpha-D-glucosidic linkages in glycogen and maltooligosaccharides such as maltoheptaose, to produce maltose which then can be converted to trehalose. TreS plays a key role in the utilization of trehalose for the production of glycogen and alpha-glucan via the TreS-Pep2 branch involved in the biosynthesis of maltose-1-phosphate (M1P). Might also function as a sensor and/or regulator of trehalose levels within the cell. Thus, when trehalose levels in the cell become dangerously low, TreS can expedite the conversion of glycogen to maltose via its amylase activity and then convert the maltose to trehalose; but this enzyme also can expedite or promote the conversion of trehalose to glycogen when cytoplasmic trehalose levels become too high. Is also able to catalyze the hydrolytic cleavage of alpha-aryl glucosides, as well as alpha-glucosyl fluoride in vitro. In Mycolicibacterium smegmatis (strain ATCC 700084 / mc(2)155) (Mycobacterium smegmatis), this protein is Trehalose synthase/amylase TreS.